Here is a 136-residue protein sequence, read N- to C-terminus: Fatty acid-binding protein homolog 5 (136 aa).

Residues Arg111 and 131–133 contribute to the a fatty acid site; that span reads RAY.

Belongs to the calycin superfamily. Fatty-acid binding protein (FABP) family.

This Caenorhabditis elegans protein is Fatty acid-binding protein homolog 5 (lbp-5).